The following is a 105-amino-acid chain: Membrane-stabilizing protein A (105 aa).

Residues 1–21 (MQFYLILLAILYLIVSFISIF) form a helical membrane-spanning segment. Residues 22 to 29 (KMEVVFTR) are Cytoplasmic-facing. A helical transmembrane segment spans residues 30–50 (ILRIIMGVLLLFVLALTTMSF). Residues 51–55 (PKENW) are Extracellular-facing. A helical transmembrane segment spans residues 56–76 (WVFIVLLLLVGNVEVTGFKML). At 77–84 (KKDLKGVN) the chain is on the cytoplasmic side. A helical transmembrane segment spans residues 85 to 105 (ILNLMSLFIFVIYFILTIVLF).

The protein belongs to the MspA family.

The protein localises to the membrane. In terms of biological role, plays a role in toxin production, resistance to host innate immune mechanisms, and iron homeostasis. The protein is Membrane-stabilizing protein A of Staphylococcus aureus (strain NCTC 8325 / PS 47).